The chain runs to 283 residues: Protein/nucleic acid deglycase HchA (283 aa).

Residues histidine 86, glutamate 91, and histidine 123 each coordinate Zn(2+). The active-site Nucleophile is cysteine 185.

This sequence belongs to the peptidase C56 family. HchA subfamily. Homodimer.

The protein localises to the cytoplasm. The catalysed reaction is N(omega)-(1-hydroxy-2-oxopropyl)-L-arginyl-[protein] + H2O = lactate + L-arginyl-[protein] + H(+). It carries out the reaction N(6)-(1-hydroxy-2-oxopropyl)-L-lysyl-[protein] + H2O = lactate + L-lysyl-[protein] + H(+). The enzyme catalyses S-(1-hydroxy-2-oxopropyl)-L-cysteinyl-[protein] + H2O = lactate + L-cysteinyl-[protein] + H(+). It catalyses the reaction N(omega)-(1-hydroxy-2-oxoethyl)-L-arginyl-[protein] + H2O = L-arginyl-[protein] + glycolate + H(+). The catalysed reaction is N(6)-(1-hydroxy-2-oxoethyl)-L-lysyl-[protein] + H2O = glycolate + L-lysyl-[protein] + H(+). It carries out the reaction S-(1-hydroxy-2-oxoethyl)-L-cysteinyl-[protein] + H2O = glycolate + L-cysteinyl-[protein] + H(+). The enzyme catalyses N(2)-(1-hydroxy-2-oxopropyl)-dGTP + H2O = lactate + dGTP + H(+). It catalyses the reaction N(2)-(1-hydroxy-2-oxopropyl)-GTP + H2O = lactate + GTP + H(+). The catalysed reaction is N(2)-(1-hydroxy-2-oxopropyl)-GDP + H2O = lactate + GDP + H(+). It carries out the reaction N(2)-(1-hydroxy-2-oxopropyl)-GMP + H2O = lactate + GMP + H(+). The enzyme catalyses N(2)-(1-hydroxy-2-oxoethyl)-dGTP + H2O = dGTP + glycolate + H(+). It catalyses the reaction N(2)-(1-hydroxy-2-oxoethyl)-GTP + H2O = glycolate + GTP + H(+). The catalysed reaction is N(2)-(1-hydroxy-2-oxoethyl)-GDP + H2O = glycolate + GDP + H(+). It carries out the reaction N(2)-(1-hydroxy-2-oxoethyl)-GMP + H2O = glycolate + GMP + H(+). The enzyme catalyses an N(2)-(1-hydroxy-2-oxopropyl)-guanosine in RNA + H2O = a guanosine in RNA + lactate + H(+). It catalyses the reaction an N(2)-(1-hydroxy-2-oxopropyl)-2'-deoxyguanosine in DNA + H2O = a 2'-deoxyguanosine in DNA + lactate + H(+). The catalysed reaction is an N(2)-(1-hydroxy-2-oxoethyl)-guanosine in RNA + H2O = a guanosine in RNA + glycolate + H(+). It carries out the reaction an N(2)-(1-hydroxy-2-oxoethyl)-2'-deoxyguanosine in DNA + H2O = a 2'-deoxyguanosine in DNA + glycolate + H(+). In terms of biological role, protein and nucleotide deglycase that catalyzes the deglycation of the Maillard adducts formed between amino groups of proteins or nucleotides and reactive carbonyl groups of glyoxals. Thus, functions as a protein deglycase that repairs methylglyoxal- and glyoxal-glycated proteins, and releases repaired proteins and lactate or glycolate, respectively. Deglycates cysteine, arginine and lysine residues in proteins, and thus reactivates these proteins by reversing glycation by glyoxals. Acts on early glycation intermediates (hemithioacetals and aminocarbinols), preventing the formation of Schiff bases and advanced glycation endproducts (AGE). Also functions as a nucleotide deglycase able to repair glycated guanine in the free nucleotide pool (GTP, GDP, GMP, dGTP) and in DNA and RNA. Is thus involved in a major nucleotide repair system named guanine glycation repair (GG repair), dedicated to reversing methylglyoxal and glyoxal damage via nucleotide sanitization and direct nucleic acid repair. Plays an important role in protecting cells from carbonyl stress. This Escherichia coli (strain 55989 / EAEC) protein is Protein/nucleic acid deglycase HchA.